The primary structure comprises 391 residues: NADH-quinone oxidoreductase subunit D (391 aa).

Belongs to the complex I 49 kDa subunit family. In terms of assembly, NDH-1 is composed of 14 different subunits. Subunits NuoB, C, D, E, F, and G constitute the peripheral sector of the complex.

Its subcellular location is the cell inner membrane. The catalysed reaction is a quinone + NADH + 5 H(+)(in) = a quinol + NAD(+) + 4 H(+)(out). Functionally, NDH-1 shuttles electrons from NADH, via FMN and iron-sulfur (Fe-S) centers, to quinones in the respiratory chain. The immediate electron acceptor for the enzyme in this species is believed to be ubiquinone. Couples the redox reaction to proton translocation (for every two electrons transferred, four hydrogen ions are translocated across the cytoplasmic membrane), and thus conserves the redox energy in a proton gradient. The polypeptide is NADH-quinone oxidoreductase subunit D (Rickettsia canadensis (strain McKiel)).